The primary structure comprises 787 residues: Endonuclease MutS2 (787 aa).

Residue 334-341 (GPNTGGKT) participates in ATP binding. Residues 712–787 (LDLRGKRYEE…GNGATIVTFK (76 aa)) form the Smr domain.

This sequence belongs to the DNA mismatch repair MutS family. MutS2 subfamily. As to quaternary structure, homodimer. Binds to stalled ribosomes, contacting rRNA.

In terms of biological role, endonuclease that is involved in the suppression of homologous recombination and thus may have a key role in the control of bacterial genetic diversity. Acts as a ribosome collision sensor, splitting the ribosome into its 2 subunits. Detects stalled/collided 70S ribosomes which it binds and splits by an ATP-hydrolysis driven conformational change. Acts upstream of the ribosome quality control system (RQC), a ribosome-associated complex that mediates the extraction of incompletely synthesized nascent chains from stalled ribosomes and their subsequent degradation. Probably generates substrates for RQC. This chain is Endonuclease MutS2, found in Latilactobacillus sakei subsp. sakei (strain 23K) (Lactobacillus sakei subsp. sakei).